Consider the following 419-residue polypeptide: Fusaric acid cluster transcription factor FUB10 (419 aa).

Positions 16–47 (CDRCRAQKLRCHRDSGHSTDACLRCLKSGIEC) form a DNA-binding region, zn(2)-C6 fungal-type. Residues 50 to 92 (SKARPTGRPPSRQVQPTVVVEQGDTSSSSHTTDSSPSAGGTDM) form a disordered region. The segment covering 74–86 (TSSSSHTTDSSPS) has biased composition (low complexity).

Its subcellular location is the nucleus. Transcription factor that regulates the expression of the gene cluster that mediates the biosynthesis of fusaric acid, a mycotoxin with low to moderate toxicity to animals and humans, but with high phytotoxic properties. The sequence is that of Fusaric acid cluster transcription factor FUB10 from Gibberella fujikuroi (strain CBS 195.34 / IMI 58289 / NRRL A-6831) (Bakanae and foot rot disease fungus).